The sequence spans 386 residues: ADP,ATP carrier protein, mitochondrial (386 aa).

A mitochondrion-targeting transit peptide spans 1–77 (MADMNQHPTV…SNASPVFVQA (77 aa)). Solcar repeat units lie at residues 84–177 (AAFA…FKRL), 189–281 (KWFA…LKPV), and 289–375 (DSFF…LQVL). A run of 5 helical transmembrane segments spans residues 86–113 (FATD…VKLL), 154–178 (TANV…KRLF), 187–207 (YWKW…SSLF), 257–278 (FNIS…YDSL), and 292–312 (FASF…SYPI). Residues arginine 159 and lysine 171 each coordinate ADP. Arginine 316 is a binding site for ADP. Residues 316-321 (RRRMMM) are important for transport activity. The Nucleotide carrier signature motif signature appears at 316-321 (RRRMMM). The chain crosses the membrane as a helical span at residues 352 to 372 (AGANILRAVAGAGVLAGYDKL).

Belongs to the mitochondrial carrier (TC 2.A.29) family. In terms of assembly, monomer.

The protein resides in the mitochondrion inner membrane. The catalysed reaction is ADP(in) + ATP(out) = ADP(out) + ATP(in). The matrix-open state (m-state) is inhibited by the membrane-permeable bongkrekic acid (BKA). The cytoplasmic-open state (c-state) is inhibited by the membrane-impermeable toxic inhibitor carboxyatractyloside (CATR). Its function is as follows. ADP:ATP antiporter that mediates import of ADP into the mitochondrial matrix for ATP synthesis, and export of ATP out to fuel the cell. Cycles between the cytoplasmic-open state (c-state) and the matrix-open state (m-state): operates by the alternating access mechanism with a single substrate-binding site intermittently exposed to either the cytosolic (c-state) or matrix (m-state) side of the inner mitochondrial membrane. The chain is ADP,ATP carrier protein, mitochondrial (ANT) from Solanum tuberosum (Potato).